Here is a 49-residue protein sequence, read N- to C-terminus: Large ribosomal subunit protein bL33 (49 aa).

It belongs to the bacterial ribosomal protein bL33 family.

The chain is Large ribosomal subunit protein bL33 from Moorella thermoacetica (strain ATCC 39073 / JCM 9320).